The chain runs to 474 residues: ERO1-like protein alpha (474 aa).

A signal peptide spans 1-29 (MVSGCCRLDMSSYVSVLVLCSLLLWGSNS). Cystine bridges form between Cys-40/Cys-53, Cys-42/Cys-51, Cys-90/Cys-398, Cys-99/Cys-104, Cys-99/Cys-138, Cys-104/Cys-109, Cys-215/Cys-248, and Cys-401/Cys-404. The FAD site is built by Arg-194, Thr-196, and Trp-207. FAD contacts are provided by Ser-259, His-262, Arg-294, and Arg-307. Asn-340 and Asn-391 each carry an N-linked (GlcNAc...) asparagine glycan. Asn-430 carries N-linked (GlcNAc...) asparagine glycosylation.

This sequence belongs to the EROs family. Predominantly monomer. May function both as a monomer and a homodimer. FAD serves as cofactor. Post-translationally, the Cys-99/Cys-104 and Cys-401/Cys-404 disulfide bonds constitute the redox-active center. The Cys-99/Cys-104 disulfide bond may accept electron from protein disulfide isomerase (PDI) and funnel them to the active site disulfide Cys-401/Cys-404.

The protein localises to the endoplasmic reticulum membrane. Its activity is regulated as follows. Enzyme activity is tightly regulated to prevent the accumulation of reactive oxygen species in the endoplasmic reticulum. Reversibly down-regulated by the formation of disulfide bonds between the active site Cys-99 and Cys-138, and between Cys-104 and Cys-109. Glutathione may be required to regulate its activity in the endoplasmic reticulum. In terms of biological role, oxidoreductase involved in disulfide bond formation in the endoplasmic reticulum. Efficiently reoxidizes P4HB/PDI, the enzyme catalyzing protein disulfide formation, in order to allow P4HB to sustain additional rounds of disulfide formation. Following P4HB reoxidation, passes its electrons to molecular oxygen via FAD, leading to the production of reactive oxygen species (ROS) in the cell. Required for the folding of immunoglobulins. The protein is ERO1-like protein alpha of Xenopus tropicalis (Western clawed frog).